We begin with the raw amino-acid sequence, 318 residues long: Pyrimidine-specific ribonucleoside hydrolase RihA (318 aa).

The active site involves H240.

Belongs to the IUNH family. RihA subfamily.

Hydrolyzes cytidine or uridine to ribose and cytosine or uracil, respectively. This is Pyrimidine-specific ribonucleoside hydrolase RihA from Shewanella sp. (strain MR-4).